The primary structure comprises 375 residues: UDP-N-acetylglucosamine--N-acetylmuramyl-(pentapeptide) pyrophosphoryl-undecaprenol N-acetylglucosamine transferase (375 aa).

UDP-N-acetyl-alpha-D-glucosamine is bound by residues 13–15 (TGG), Asn124, Arg165, Ser193, and Gln294.

It belongs to the glycosyltransferase 28 family. MurG subfamily.

It localises to the cell inner membrane. The enzyme catalyses di-trans,octa-cis-undecaprenyl diphospho-N-acetyl-alpha-D-muramoyl-L-alanyl-D-glutamyl-meso-2,6-diaminopimeloyl-D-alanyl-D-alanine + UDP-N-acetyl-alpha-D-glucosamine = di-trans,octa-cis-undecaprenyl diphospho-[N-acetyl-alpha-D-glucosaminyl-(1-&gt;4)]-N-acetyl-alpha-D-muramoyl-L-alanyl-D-glutamyl-meso-2,6-diaminopimeloyl-D-alanyl-D-alanine + UDP + H(+). It functions in the pathway cell wall biogenesis; peptidoglycan biosynthesis. Cell wall formation. Catalyzes the transfer of a GlcNAc subunit on undecaprenyl-pyrophosphoryl-MurNAc-pentapeptide (lipid intermediate I) to form undecaprenyl-pyrophosphoryl-MurNAc-(pentapeptide)GlcNAc (lipid intermediate II). The sequence is that of UDP-N-acetylglucosamine--N-acetylmuramyl-(pentapeptide) pyrophosphoryl-undecaprenol N-acetylglucosamine transferase from Mesorhizobium japonicum (strain LMG 29417 / CECT 9101 / MAFF 303099) (Mesorhizobium loti (strain MAFF 303099)).